The chain runs to 72 residues: SPbeta prophage-derived uncharacterized protein YoqN (72 aa).

The protein is SPbeta prophage-derived uncharacterized protein YoqN (yoqN) of Bacillus subtilis (strain 168).